The following is a 367-amino-acid chain: Mitochondrial GTPase 1 (367 aa).

One can recognise a CP-type G domain in the interval 42–228 (LKTFEKLLPQ…LIDTPGIGVP (187 aa)). GTP-binding positions include 89–92 (TRKD), 160–165 (NVGKST), and glycine 224.

This sequence belongs to the TRAFAC class YlqF/YawG GTPase family. MTG1 subfamily.

It localises to the mitochondrion inner membrane. Its function is as follows. Mitochondrial GTPase involved in assembly of the large ribosomal subunit. Plays a role in expression of the mitochondrial translational machinery. The chain is Mitochondrial GTPase 1 (MTG1) from Saccharomyces cerevisiae (strain ATCC 204508 / S288c) (Baker's yeast).